The following is a 504-amino-acid chain: Probable cytochrome P450 513E1 (504 aa).

Residues 1-21 traverse the membrane as a helical segment; that stretch reads MNLYISILILIISLIIFFKNN. Cysteine 450 is a heme binding site.

It belongs to the cytochrome P450 family. Requires heme as cofactor.

The protein resides in the membrane. This is Probable cytochrome P450 513E1 (cyp513E1) from Dictyostelium discoideum (Social amoeba).